Here is a 655-residue protein sequence, read N- to C-terminus: DNA mismatch repair protein MutL (655 aa).

Disordered regions lie at residues 357–416 (EKKQ…DDYT) and 439–460 (DFDS…SKDP). Basic and acidic residues predominate over residues 371-383 (SHEEDEKNDDKAY). Polar residues predominate over residues 402-416 (NTSVSTSPNSDDDYT).

This sequence belongs to the DNA mismatch repair MutL/HexB family.

In terms of biological role, this protein is involved in the repair of mismatches in DNA. It is required for dam-dependent methyl-directed DNA mismatch repair. May act as a 'molecular matchmaker', a protein that promotes the formation of a stable complex between two or more DNA-binding proteins in an ATP-dependent manner without itself being part of a final effector complex. The polypeptide is DNA mismatch repair protein MutL (Staphylococcus saprophyticus subsp. saprophyticus (strain ATCC 15305 / DSM 20229 / NCIMB 8711 / NCTC 7292 / S-41)).